The sequence spans 754 residues: Gelsolin, cytoplasmic (754 aa).

Positions 1–120 are actin-severing; the sequence is MVPAFEGAGA…RYLKGGVASG (120 aa). The Gelsolin-like 1 repeat unit spans residues 22 to 71; sequence FEVVPYPKEKYGQFYQGDSYIVLYTRDVNGNLSWDLHFWLGSETSQDEAG. The interval 68-71 is actin-actin interfilament contact point; it reads DEAG. Residues 101 to 108 and 133 to 141 contribute to the a 1,2-diacyl-sn-glycero-3-phospho-(1D-myo-inositol-4,5-bisphosphate) site; these read LFLSRFKK and RLFHVKGRR. A Gelsolin-like 2 repeat occupies 143–183; that stretch reads IRIRQVEVGVGSMNKGDCFILDCGSQVYAYMGPSSRKMDRL. The disordered stretch occupies residues 209–238; it reads TASGSEAGESSPGLGGGSPDDVADEDTGVD. The segment covering 210 to 220 has biased composition (low complexity); the sequence is ASGSEAGESSP. 4 Gelsolin-like repeats span residues 266–306, 414–463, 538–580, and 643–684; these read NMIG…KEKV, LKLE…DEKA, FDTR…EEKA, and LRVN…QEKE. Residues 386–751 are actin-binding, Ca-sensitive; that stretch reads LLQKNAGPAF…MKAQVPETNA (366 aa). Gly-430, Asp-431, Glu-461, Asp-556, Glu-578, Asp-659, Asp-660, and Glu-682 together coordinate Ca(2+).

It belongs to the villin/gelsolin family. As to expression, tail muscle.

It localises to the cytoplasm. The protein localises to the cytoskeleton. Calcium-regulated, actin-modulating protein that binds to the plus (or barbed) ends of actin monomers or filaments, preventing monomer exchange (end-blocking or capping). It can promote the assembly of monomers into filaments (nucleation) as well as sever filaments already formed. This Homarus americanus (American lobster) protein is Gelsolin, cytoplasmic.